The following is a 21-amino-acid chain: Misgurin (21 aa).

The interval 1 to 21 (RQRVEELSKFSKKGAAARRRK) is disordered. The segment covering 10 to 21 (FSKKGAAARRRK) has biased composition (basic residues).

The protein resides in the secreted. Strong antimicrobial activity against several Gram-positive and Gram-negative bacteria and fungi. The protein is Misgurin of Misgurnus anguillicaudatus (Oriental weatherloach).